A 104-amino-acid polypeptide reads, in one-letter code: MPKSDTKQKKRRSNKNRLRIKRARLFGPKDIDQVKEDIESQKKIEYDPELPGGGHFYCCECDRHFITEKVLMEHKRSNPHRRRAKEVREVAHSQRDAEWAVGLT.

Residues 56–80 form a C2H2-type zinc finger; sequence FYCCECDRHFITEKVLMEHKRSNPH.

This sequence belongs to the ZNF593/BUD20 C2H2-type zinc-finger protein family. As to quaternary structure, associates with pre-60S ribosomal particles; released from the pre-60S particle very early in the cytoplasm.

Its subcellular location is the nucleus. It localises to the cytoplasm. In terms of biological role, involved in pre-60S ribosomal particles maturation by promoting the nuclear export of the 60S ribosome. In Encephalitozoon cuniculi (strain GB-M1) (Microsporidian parasite), this protein is Zinc finger C2H2 protein ECU02_0310.